A 472-amino-acid polypeptide reads, in one-letter code: FAD-dependent monooxygenase ltmM (472 aa).

Residues 7–27 form a helical membrane-spanning segment; that stretch reads VIIVGGSVAGLSLAHCLEKIG. 3 residues coordinate FAD: Glu-34, Gly-48, and Arg-107. Asn-186 carries N-linked (GlcNAc...) asparagine glycosylation. Residues Asp-306 and Ala-319 each coordinate FAD. The chain crosses the membrane as a helical span at residues 450–470; the sequence is IVYALYLVAAAAFILYCLSSL.

It belongs to the paxM FAD-dependent monooxygenase family. It depends on FAD as a cofactor.

It localises to the membrane. It participates in secondary metabolite biosynthesis. In terms of biological role, FAD-dependent monooxygenase; part of the gene cluster that mediates the biosynthesis of lolitrems, indole-diterpene mycotoxins that are potent tremorgens in mammals, and are synthesized by clavicipitaceous fungal endophytes in association with their grass hosts. The geranylgeranyl diphosphate (GGPP) synthase ltmG is proposed to catalyze the first step in lolitrem biosynthesis. LtmG catalyzes a series of iterative condensations of isopentenyl diphosphate (IPP) with dimethylallyl diphosphate (DMAPP), geranyl diphosphate (GPP), and farnesyl diphosphate (FPP), to form GGPP. GGPP then condenses with indole-3-glycerol phosphate to form 3-geranylgeranylindole, an acyclic intermediate, to be incorporated into paxilline. Either ltmG or ltmC could be responsible for this step, as both are putative prenyl transferases. The FAD-dependent monooxygenase ltmM then catalyzes the epoxidation of the two terminal alkenes of the geranylgeranyl moiety, which is subsequently cyclized by ltmC, to paspaline. The cytochrome P450 monooxygenases ltmQ and ltmP can sequentially oxidize paspaline to terpendole E and terpendole F. Alternatively, ltmP converts paspaline to an intermediate which is oxidized by ltmQ to terpendole F. LtmF, ltmK, ltmE and ltmJ appear to be unique to the epichloe endophytes. The prenyltransferase ltmF is involved in the 27-hydroxyl-O-prenylation. The cytochrome P450 monooxygenase ltmK is required for the oxidative acetal ring formation. The multi-functional prenyltransferase ltmE is required for C20- and C21-prenylations of the indole ring of paspalanes and acts together with the cytochrome P450 monooxygenase ltmJ to yield lolitremanes by multiple oxidations and ring closures. The stereoisomer pairs of lolitriol and lolitrem N or lolitrem B and lolitrem F may be attributed to variations in the way in which ring closure can occur under the action of ltmJ. While the major product of this pathway is lolitrem B, the prenyl transferases and cytochrome P450 monooxygenases identified in this pathway have a remarkable versatility in their regio- and stereo-specificities to generate a diverse range of metabolites that are products of a metabolic grid rather than a linear pathway. In Epichloe festucae (strain Fl1), this protein is FAD-dependent monooxygenase ltmM (ltmM).